We begin with the raw amino-acid sequence, 225 residues long: C-reactive protein (225 aa).

The signal sequence occupies residues 1–19 (MAKLLLYFLLLTSLSDVFG). Positions 24 to 225 (SKKTFVFPKE…EVFIKPQLWP (202 aa)) constitute a Pentraxin (PTX) domain. Cys-55 and Cys-116 form a disulfide bridge. Residues Asn-80, Gln-158, Asp-159, and Gln-169 each contribute to the Ca(2+) site.

The protein belongs to the pentraxin family. As to quaternary structure, homopentamer. Pentraxin (or pentaxin) have a discoid arrangement of 5 non-covalently bound subunits. Interacts with FCN1; may regulate monocyte activation by FCN1. Ca(2+) is required as a cofactor. In terms of tissue distribution, found in plasma.

It localises to the secreted. Its function is as follows. Displays several functions associated with host defense: it promotes agglutination, bacterial capsular swelling, phagocytosis and complement fixation through its calcium-dependent binding to phosphorylcholine. Can interact with DNA and histones and may scavenge nuclear material released from damaged circulating cells. The sequence is that of C-reactive protein (CRP) from Cavia porcellus (Guinea pig).